The chain runs to 426 residues: Mitochondrial distribution and morphology protein 12 (426 aa).

One can recognise an SMP-LTD domain in the interval M1–I426. 3 disordered regions span residues A88–G147, W185–P264, and A346–R370. Over residues T96–V109 the composition is skewed to basic and acidic residues. The span at S216 to S236 shows a compositional bias: low complexity. Composition is skewed to basic and acidic residues over residues S244 to P264 and Q349 to S360.

Belongs to the MDM12 family. As to quaternary structure, component of the ER-mitochondria encounter structure (ERMES) or MDM complex, composed of mmm1, mdm10, mdm12 and mdm34. A mmm1 homodimer associates with one molecule of mdm12 on each side in a pairwise head-to-tail manner, and the SMP-LTD domains of mmm1 and mdm12 generate a continuous hydrophobic tunnel for phospholipid trafficking.

The protein localises to the mitochondrion outer membrane. Its subcellular location is the endoplasmic reticulum membrane. Its function is as follows. Component of the ERMES/MDM complex, which serves as a molecular tether to connect the endoplasmic reticulum (ER) and mitochondria. Components of this complex are involved in the control of mitochondrial shape and protein biogenesis, and function in nonvesicular lipid trafficking between the ER and mitochondria. Mdm12 is required for the interaction of the ER-resident membrane protein mmm1 and the outer mitochondrial membrane-resident beta-barrel protein mdm10. The mdm12-mmm1 subcomplex functions in the major beta-barrel assembly pathway that is responsible for biogenesis of all mitochondrial outer membrane beta-barrel proteins, and acts in a late step after the SAM complex. The mdm10-mdm12-mmm1 subcomplex further acts in the TOM40-specific pathway after the action of the mdm12-mmm1 complex. Essential for establishing and maintaining the structure of mitochondria and maintenance of mtDNA nucleoids. The protein is Mitochondrial distribution and morphology protein 12 of Aspergillus terreus (strain NIH 2624 / FGSC A1156).